The chain runs to 472 residues: Eukaryotic translation initiation factor 2 subunit 3 (472 aa).

Ala2 is subject to N-acetylalanine. Ser16 is modified (phosphoserine). Residues 39–248 enclose the tr-type G domain; sequence QATINIGTIG…IVKKIPVPPR (210 aa). The segment at 48–55 is G1; sequence GHVAHGKS. 51–56 provides a ligand contact to GTP; the sequence is AHGKST. The interval 76–80 is G2; the sequence is NITIK. The segment at 134 to 137 is G3; sequence DCPG. Residues 190 to 193 and 225 to 227 contribute to the GTP site; these read NKID and SAQ. A G4 region spans residues 190-193; it reads NKID. The G5 stretch occupies residues 225-227; sequence SAQ. The segment at 457 to 469 is interacts with CDC123; sequence GQIRRGVTIKPTV.

This sequence belongs to the TRAFAC class translation factor GTPase superfamily. Classic translation factor GTPase family. EIF2G subfamily. Eukaryotic translation initiation factor 2 eIF2 is a heterotrimeric complex composed of an alpha (EIF2S1), a beta (EIF2S2) and a gamma (EIF2S3) chain. eIF2 is member of the 43S pre-initiation complex (43S PIC). Interacts (via C-terminus) with CDC123; the interaction is direct.

It localises to the cytoplasm. Its subcellular location is the cytosol. The catalysed reaction is GTP + H2O = GDP + phosphate + H(+). Functionally, member of the eIF2 complex that functions in the early steps of protein synthesis by forming a ternary complex with GTP and initiator tRNA. This complex binds to a 40S ribosomal subunit, followed by mRNA binding to form the 43S pre-initiation complex (43S PIC). Junction of the 60S ribosomal subunit to form the 80S initiation complex is preceded by hydrolysis of the GTP bound to eIF2 and release of an eIF2-GDP binary complex. In order for eIF2 to recycle and catalyze another round of initiation, the GDP bound to eIF2 must exchange with GTP by way of a reaction catalyzed by eIF-2B. The chain is Eukaryotic translation initiation factor 2 subunit 3 (EIF2S3) from Sus scrofa (Pig).